We begin with the raw amino-acid sequence, 362 residues long: Heat-inducible transcription repressor HrcA (362 aa).

This sequence belongs to the HrcA family.

Negative regulator of class I heat shock genes (grpE-dnaK-dnaJ and groELS operons). Prevents heat-shock induction of these operons. This is Heat-inducible transcription repressor HrcA from Rhizobium rhizogenes (strain K84 / ATCC BAA-868) (Agrobacterium radiobacter).